A 760-amino-acid chain; its full sequence is Amyloid beta precursor protein binding family B member 2 (760 aa).

Ser-123 and Ser-160 each carry phosphoserine. Disordered stretches follow at residues 177-295 and 324-351; these read QNLG…LPPG and PADLHGSRKGSLSSVTPSPTPENEKQPW. 2 stretches are compositionally biased toward polar residues: residues 212–230 and 261–275; these read NKPQSSPEDGQVATVSSSP and SWTTLSQDSASPSSP. The WW domain maps to 290–322; it reads PDLPPGWKRVNDIAGTYYWHIPTGTTQWERPVS. Residues Ser-334, Ser-409, and Ser-412 each carry the phosphoserine modification. PID domains lie at 413–580 and 586–738; these read DPEA…LQVD and TELV…VTTN.

Interacts (via C-terminus) with APP (via C-terminus). Interacts with APLP2 (via cytoplasmic domain). In terms of tissue distribution, expressed in the brain, retinal lens and muscle cells (at protein level).

It is found in the endoplasmic reticulum. The protein resides in the golgi apparatus. Its subcellular location is the early endosome. Its function is as follows. Plays a role in the maintenance of lens transparency, and may also play a role in muscle cell strength. Involved in hippocampal neurite branching and neuromuscular junction formation, as a result plays a role in spatial memory functioning. Activates transcription of APP. This chain is Amyloid beta precursor protein binding family B member 2, found in Mus musculus (Mouse).